Reading from the N-terminus, the 718-residue chain is MNDSRNRGRKVTRKAGPPEAGQENHLDTPVFQAPDASSNQSAVKAETAGNDNRDAAQGAQGSQDSQGSQNAQGSQNRESGNNNRNRSNNNRRGGRGRRGSGNANEGANNNSGNQNRQGGNRGNRGGGRRNVVKSMQGADLTQRLPEPPKAPANGLRIYALGGISEIGRNMTVFEYNNRLLIVDCGVLFPSSGEPGVDLILPDFGPIEDHLHRVDALVVTHGHEDHIGAIPWLLKLRNDIPILASRFTLALIAAKCKEHRQRPKLIEVNEQSNEDRGPFNIRFWAVNHSIPDCLGLAIKTPAGLVIHTGDIKLDQTPPDGRPTDLPALSRFGDEGVDLMLCDSTNATTPGVSGSEADVAPTLKRLVGDAKQRVILASFASNVYRVQAAVDAAVASNRKVAFNGRSMIRNMEIAEKLGYLKAPRGTIISMDDASRMAPHKVMLITTGTQGEPMAALSRMARREHRQITVRDGDLIILSSSLVPGNEEAVFGVINMLAQIGATVVTGRDAKVHTSGHGYSGELLFLYNAARPKNAMPVHGEWRHLRANKELAISTGVNRDNVVLAQNGVVVDMVNGRAQVVGQIPVGNLYVDGVTMGDIDADILADRTSLGEGGLISITAVIDNRTGRLLERPTVQTSGFSEDAKSMMGEVTELSETTMNDLAAEGENDPYRMVQQLRRKLSRFVEQKWKRQPVIMPTVIPMTAETTHIGDDEVRASRESL.

The disordered stretch occupies residues 1–130 (MNDSRNRGRK…RGNRGGGRRN (130 aa)). Low complexity-rich tracts occupy residues 55–91 (AAQG…NNNR) and 100–118 (SGNA…NRQG). Zn(2+) contacts are provided by His220, His222, Asp224, His225, His287, and Asp309. Residue 510–514 (HTSGH) participates in substrate binding. Residue His536 participates in Zn(2+) binding.

The protein belongs to the metallo-beta-lactamase superfamily. RNA-metabolizing metallo-beta-lactamase-like family. Bacterial RNase J subfamily. As to quaternary structure, homodimer, may be a subunit of the RNA degradosome. It depends on Zn(2+) as a cofactor.

Its subcellular location is the cytoplasm. Functionally, an RNase that has 5'-3' exonuclease and possibly endoonuclease activity. Involved in maturation of rRNA and in some organisms also mRNA maturation and/or decay. This Corynebacterium glutamicum (strain ATCC 13032 / DSM 20300 / JCM 1318 / BCRC 11384 / CCUG 27702 / LMG 3730 / NBRC 12168 / NCIMB 10025 / NRRL B-2784 / 534) protein is Ribonuclease J.